The primary structure comprises 295 residues: Phosphatidylserine decarboxylase proenzyme (295 aa).

Catalysis depends on charge relay system; for autoendoproteolytic cleavage activity residues aspartate 90, histidine 147, and serine 254. Catalysis depends on serine 254, which acts as the Schiff-base intermediate with substrate; via pyruvic acid; for decarboxylase activity. Position 254 is a pyruvic acid (Ser); by autocatalysis (serine 254).

It belongs to the phosphatidylserine decarboxylase family. PSD-B subfamily. Prokaryotic type I sub-subfamily. Heterodimer of a large membrane-associated beta subunit and a small pyruvoyl-containing alpha subunit. Requires pyruvate as cofactor. Post-translationally, is synthesized initially as an inactive proenzyme. Formation of the active enzyme involves a self-maturation process in which the active site pyruvoyl group is generated from an internal serine residue via an autocatalytic post-translational modification. Two non-identical subunits are generated from the proenzyme in this reaction, and the pyruvate is formed at the N-terminus of the alpha chain, which is derived from the carboxyl end of the proenzyme. The autoendoproteolytic cleavage occurs by a canonical serine protease mechanism, in which the side chain hydroxyl group of the serine supplies its oxygen atom to form the C-terminus of the beta chain, while the remainder of the serine residue undergoes an oxidative deamination to produce ammonia and the pyruvoyl prosthetic group on the alpha chain. During this reaction, the Ser that is part of the protease active site of the proenzyme becomes the pyruvoyl prosthetic group, which constitutes an essential element of the active site of the mature decarboxylase.

Its subcellular location is the cell membrane. The enzyme catalyses a 1,2-diacyl-sn-glycero-3-phospho-L-serine + H(+) = a 1,2-diacyl-sn-glycero-3-phosphoethanolamine + CO2. It functions in the pathway phospholipid metabolism; phosphatidylethanolamine biosynthesis; phosphatidylethanolamine from CDP-diacylglycerol: step 2/2. Its function is as follows. Catalyzes the formation of phosphatidylethanolamine (PtdEtn) from phosphatidylserine (PtdSer). The polypeptide is Phosphatidylserine decarboxylase proenzyme (Sodalis glossinidius (strain morsitans)).